Consider the following 498-residue polypeptide: MKTIHFDMNKYETHVDLEYLKEHGRVEKISDGVIFCSGLENAALHQAVLIDERHRGVILELNEEFVGIGLIDKTNDILEGMHVGVSGKFIEVDLFEEMAGRIIDTTGKMLYEESEEKPTATSPLFCVTPAIMTIDSVTRPLNTGLAVIDSITPIGRGQRQLILGNRQSGKTQIAVDTIINQHDQNVHCIYVAIGLKAAYIAEVIETLRNHGAMEYSTVVATAASDSLTAQYLTPYAGMALAEALRDQGKDVLIILDDLTKHADAYRAITLLFNRPPGREAYPGDSFYIHSSLLERAVQMNEEHGGGSITAIPMIETLSDDVTAYIPTNVISITDGQLFLKSDLFNRGQKPAVDVGVSVSRIGGDAQHPIIRKLSKNLTLILSQFEELKELLDFGNALDDGSMKMVSDGRLLTELFKQKILSPLSVTELIVILYAFQNGFLTKIPPANIQTFKGLLLEKAHMHKDFESFSAQIEAINELNESHVEMLEEIIRETGRLFS.

This sequence belongs to the ATPase alpha/beta chains family. As to quaternary structure, F-type ATPases have 2 components, CF(1) - the catalytic core - and CF(0) - the membrane proton channel. CF(1) has five subunits: alpha(3), beta(3), gamma(1), delta(1), epsilon(1). CF(0) has three main subunits: a(1), b(2) and c(9-12). The alpha and beta chains form an alternating ring which encloses part of the gamma chain. CF(1) is attached to CF(0) by a central stalk formed by the gamma and epsilon chains, while a peripheral stalk is formed by the delta and b chains.

It is found in the cell membrane. The catalysed reaction is ATP + H2O + 4 H(+)(in) = ADP + phosphate + 5 H(+)(out). In terms of biological role, produces ATP from ADP in the presence of a proton gradient across the membrane. The alpha chain is a regulatory subunit. The chain is ATP synthase subunit alpha 1 from Listeria monocytogenes serovar 1/2a (strain ATCC BAA-679 / EGD-e).